The chain runs to 333 residues: Glycerol-3-phosphate dehydrogenase [NAD(P)+] (333 aa).

NADPH contacts are provided by W13, K33, and K108. 2 residues coordinate sn-glycerol 3-phosphate: K108 and G138. S142 lines the NADPH pocket. Sn-glycerol 3-phosphate-binding residues include K193, D246, S256, R257, and N258. The active-site Proton acceptor is K193. Residue R257 coordinates NADPH. NADPH is bound by residues V281 and E283.

It belongs to the NAD-dependent glycerol-3-phosphate dehydrogenase family.

It localises to the cytoplasm. The enzyme catalyses sn-glycerol 3-phosphate + NAD(+) = dihydroxyacetone phosphate + NADH + H(+). It catalyses the reaction sn-glycerol 3-phosphate + NADP(+) = dihydroxyacetone phosphate + NADPH + H(+). Its pathway is membrane lipid metabolism; glycerophospholipid metabolism. Catalyzes the reduction of the glycolytic intermediate dihydroxyacetone phosphate (DHAP) to sn-glycerol 3-phosphate (G3P), the key precursor for phospholipid synthesis. The chain is Glycerol-3-phosphate dehydrogenase [NAD(P)+] from Bifidobacterium longum subsp. infantis (strain ATCC 15697 / DSM 20088 / JCM 1222 / NCTC 11817 / S12).